The primary structure comprises 140 residues: Fluoride-specific ion channel FluC 2 (140 aa).

4 helical membrane passes run 7–27 (VPPL…LGAL), 45–65 (WATF…MVLV), 77–97 (PFAG…GLEI), and 106–126 (VLEA…GVVL). The Na(+) site is built by glycine 85 and threonine 88.

The protein belongs to the fluoride channel Fluc/FEX (TC 1.A.43) family.

Its subcellular location is the cell membrane. It carries out the reaction fluoride(in) = fluoride(out). With respect to regulation, na(+) is not transported, but it plays an essential structural role and its presence is essential for fluoride channel function. Fluoride-specific ion channel. Important for reducing fluoride concentration in the cell, thus reducing its toxicity. The protein is Fluoride-specific ion channel FluC 2 of Nocardia farcinica (strain IFM 10152).